Reading from the N-terminus, the 532-residue chain is BEL1-like homeodomain protein 6 (532 aa).

The interval 144–160 (SKYLKAAQQLLDEAVNV) is SR/KY domain. The disordered stretch occupies residues 170–203 (EGDKNNENPQEPNQSTQDSSTNPPADISQSERQE). Residues 176–197 (ENPQEPNQSTQDSSTNPPADIS) show a composition bias toward polar residues. The tract at residues 200–271 (ERQEMQSKLT…SLRDAISGQI (72 aa)) is BELL domain. A DNA-binding region (homeobox) is located at residues 314–376 (AWRPQRGLPE…NARVRLWKPM (63 aa)). The disordered stretch occupies residues 385-434 (FTENDSNSSSENTPKMSEIGPVAADDEDRAREFSQDQTKPDHGHGYGEET). Over residues 412 to 434 (DRAREFSQDQTKPDHGHGYGEET) the composition is skewed to basic and acidic residues.

Belongs to the TALE/BELL homeobox family. In terms of assembly, may form heterodimeric complexes with TALE/KNOX proteins. Interacts with OFP2, OFP4, and OFP5.

Its subcellular location is the nucleus. This chain is BEL1-like homeodomain protein 6 (BLH6), found in Arabidopsis thaliana (Mouse-ear cress).